The chain runs to 264 residues: TLC domain-containing protein 4-B (264 aa).

6 consecutive transmembrane segments (helical) span residues 6 to 26 (VYVVAGSFVGFQLFFSCVSPV), 50 to 70 (LVSTVHALIVGLFCLYILWYD), 84 to 104 (LVKLNVAITCGYLFYDLLLLA), 110 to 130 (MGDVFFVCHHLAALYAYGYVL), 169 to 189 (LVVANGIAMAVVFFLVRIAVM), and 210 to 230 (LAIQVAWIISCVCLDILNIIW). A TLC domain is found at 41–243 (NKLNDWNSRL…IARGCYKVIT (203 aa)).

This sequence belongs to the TLCD4 family.

Its subcellular location is the membrane. The chain is TLC domain-containing protein 4-B (tlcd4b) from Danio rerio (Zebrafish).